The following is a 692-amino-acid chain: Elongation factor G (692 aa).

Residues 8–282 (EKTRNIGIMA…AVLDYLPAPT (275 aa)) enclose the tr-type G domain. Residues 17–24 (AHIDAGKT), 81–85 (DTPGH), and 135–138 (NKMD) contribute to the GTP site. Ser-213, Ser-302, Ser-569, and Ser-680 each carry phosphoserine.

Belongs to the TRAFAC class translation factor GTPase superfamily. Classic translation factor GTPase family. EF-G/EF-2 subfamily. In terms of processing, phosphorylated on threonine residue(s). Phosphorylated by PrkC and dephosphorylated by PrpC, in vitro.

The protein resides in the cytoplasm. In terms of biological role, catalyzes the GTP-dependent ribosomal translocation step during translation elongation. During this step, the ribosome changes from the pre-translocational (PRE) to the post-translocational (POST) state as the newly formed A-site-bound peptidyl-tRNA and P-site-bound deacylated tRNA move to the P and E sites, respectively. Catalyzes the coordinated movement of the two tRNA molecules, the mRNA and conformational changes in the ribosome. The sequence is that of Elongation factor G (fusA) from Bacillus subtilis (strain 168).